The sequence spans 393 residues: NAD(P)H-quinone oxidoreductase subunit H, chloroplastic (393 aa).

Belongs to the complex I 49 kDa subunit family. NDH is composed of at least 16 different subunits, 5 of which are encoded in the nucleus.

The protein resides in the plastid. It localises to the chloroplast thylakoid membrane. It carries out the reaction a plastoquinone + NADH + (n+1) H(+)(in) = a plastoquinol + NAD(+) + n H(+)(out). The catalysed reaction is a plastoquinone + NADPH + (n+1) H(+)(in) = a plastoquinol + NADP(+) + n H(+)(out). NDH shuttles electrons from NAD(P)H:plastoquinone, via FMN and iron-sulfur (Fe-S) centers, to quinones in the photosynthetic chain and possibly in a chloroplast respiratory chain. The immediate electron acceptor for the enzyme in this species is believed to be plastoquinone. Couples the redox reaction to proton translocation, and thus conserves the redox energy in a proton gradient. In Drimys granadensis, this protein is NAD(P)H-quinone oxidoreductase subunit H, chloroplastic.